Here is a 180-residue protein sequence, read N- to C-terminus: ATP-dependent protease subunit HslV (180 aa).

The active site involves threonine 8. Glycine 165, cysteine 168, and threonine 171 together coordinate Na(+).

The protein belongs to the peptidase T1B family. HslV subfamily. As to quaternary structure, a double ring-shaped homohexamer of HslV is capped on each side by a ring-shaped HslU homohexamer. The assembly of the HslU/HslV complex is dependent on binding of ATP.

It is found in the cytoplasm. The catalysed reaction is ATP-dependent cleavage of peptide bonds with broad specificity.. Its activity is regulated as follows. Allosterically activated by HslU binding. Functionally, protease subunit of a proteasome-like degradation complex believed to be a general protein degrading machinery. This is ATP-dependent protease subunit HslV from Halalkalibacterium halodurans (strain ATCC BAA-125 / DSM 18197 / FERM 7344 / JCM 9153 / C-125) (Bacillus halodurans).